Here is a 461-residue protein sequence, read N- to C-terminus: UDP-N-acetylmuramate--L-alanine ligase (461 aa).

Residue 112–118 (GTHGKTT) participates in ATP binding.

The protein belongs to the MurCDEF family.

The protein resides in the cytoplasm. The enzyme catalyses UDP-N-acetyl-alpha-D-muramate + L-alanine + ATP = UDP-N-acetyl-alpha-D-muramoyl-L-alanine + ADP + phosphate + H(+). It participates in cell wall biogenesis; peptidoglycan biosynthesis. In terms of biological role, cell wall formation. The sequence is that of UDP-N-acetylmuramate--L-alanine ligase from Geobacter sp. (strain M21).